The following is a 127-amino-acid chain: MLSLLSKAVSLAILVTAVVASPAGNGVEWSGGGTTTVTVTASSPTTTVTQSQCSTGDQKCCQSVQNSSAAGVSSLLGLLGIVLSGTDVPVGLTCLPIVGGACQSQAVCCTDNSYGNLISLGCSPLQL.

The signal sequence occupies residues Met1–Ala20. Disulfide bonds link Cys53–Cys108, Cys60–Cys102, Cys61–Cys94, and Cys109–Cys122. The N-linked (GlcNAc...) asparagine glycan is linked to Asn66.

It belongs to the fungal hydrophobin family. Self-assembles to form functional amyloid fibrils called rodlets. Self-assembly into fibrillar rodlets occurs spontaneously at hydrophobic:hydrophilic interfaces and the rodlets further associate laterally to form amphipathic monolayers. As to expression, expressed everywhere in the mycelial tissues of developing fruiting bodies except for the top parts of the pileus (cap) and for the prehymenophore; but high level of the transcript is detected in the parts surrounding the prehymenophore.

The protein localises to the secreted. The protein resides in the cell wall. Aerial growth, conidiation, and dispersal of filamentous fungi in the environment rely upon a capability of their secreting small amphipathic proteins called hydrophobins (HPBs) with low sequence identity. Class I can self-assemble into an outermost layer of rodlet bundles on aerial cell surfaces, conferring cellular hydrophobicity that supports fungal growth, development and dispersal; whereas Class II form highly ordered films at water-air interfaces through intermolecular interactions but contribute nothing to the rodlet structure. Hyd1 is a class I hydrophobin that plays a role in fruiting body initiation rather than in mature fruit body maintenance. Seems to be involved in the formation in the extracellular matrix of lined air channels with a hydrophobic membrane. These channels may help to provide gas exchange during respiration in mycelial tissues of developing fruiting bodies and are formed all over the mycelial tissues of these developing fruiting bodies except for the top parts of the pileus (cap) and for the prehymenophore. The protein is Class I hydrophobin 1 of Lentinula edodes (Shiitake mushroom).